A 639-amino-acid polypeptide reads, in one-letter code: Far upstream element-binding protein 1 (639 aa).

2 disordered regions span residues 1–27 and 40–88; these read MADY…NDAF and KIGG…LPPM. Alanine 2 is subject to N-acetylalanine. Gly residues predominate over residues 14–23; it reads SAGGGGGGGV. Residues serine 48 and serine 51 each carry the phosphoserine modification. A compositionally biased stretch (basic and acidic residues) spans 61–73; sequence RPLEDGDQPDAKK. KH domains lie at 95 to 159, 180 to 246, and 270 to 334; these read VMTE…KRLL, NAVQ…KEMV, and NEGI…AEII. The residue at position 135 (serine 135) is a Phosphoserine. Position 148 is a phosphothreonine (threonine 148). 4 positions are modified to omega-N-methylarginine: arginine 316, arginine 354, arginine 356, and arginine 358. Residues 341-360 form a disordered region; it reads VQAGNPGGPGPGGRGRGRGQ. A compositionally biased stretch (gly residues) spans 345 to 360; the sequence is NPGGPGPGGRGRGRGQ. Positions 371 to 438 constitute a KH 4 domain; sequence LQEFNFIVPT…QQIDYARQLI (68 aa). The residue at position 427 (threonine 427) is a Phosphothreonine. Disordered regions lie at residues 442 to 527 and 543 to 574; these read IGGP…GTDP and QAQP…PAGQ. A compositionally biased stretch (pro residues) spans 463 to 500; that stretch reads PHGPPGPPGPGTPMGPYNPAPYNPGPPGPAPHGPPAPY. A compositionally biased stretch (low complexity) spans 551 to 568; the sequence is PAGAPTTTQTNGQGDQQN. Serine 625 is subject to Phosphoserine.

As to quaternary structure, found in a complex with PUF60 and far upstream element (FUSE) DNA segment. Interacts with PUF60 and JTV1. Post-translationally, ubiquitinated. This targets the protein for proteasome-mediated degradation.

The protein resides in the nucleus. Regulates MYC expression by binding to a single-stranded far-upstream element (FUSE) upstream of the MYC promoter. May act both as activator and repressor of transcription. In Rattus norvegicus (Rat), this protein is Far upstream element-binding protein 1.